We begin with the raw amino-acid sequence, 345 residues long: Papain (345 aa).

The N-terminal stretch at 1-18 (MAMIPSISKLLFVAICLF) is a signal peptide. The propeptide at 19–133 (VYMGLSFGDF…EEVLNDGDVN (115 aa)) is activation peptide. Intrachain disulfides connect C155-C196, C189-C228, and C286-C333. The active site involves C158. C158 contacts E64. C158 provides a ligand contact to leupeptin. Catalysis depends on residues H292 and N308.

The protein belongs to the peptidase C1 family.

The catalysed reaction is Hydrolysis of proteins with broad specificity for peptide bonds, but preference for an amino acid bearing a large hydrophobic side chain at the P2 position. Does not accept Val in P1'.. With respect to regulation, repressed by the active-site-directed cysteine protease inhibitor E64 (L-trans-epoxysuccinyl-leucylamide-(4-guanido)-butane) produced by Aspergillus japonicus. Inhibited by the inhibitor of cysteine proteases from Trypanosoma brucei (TbICP, rhodesain) and Colocasia esculenta cv. Kaohsiung no. 1 (CeCPI, tarocystatin). Repressed by leupeptin, a peptidic cysteine, serine and threonine protease inhibitor. Its function is as follows. Cysteine proteinase with a high level of diversity in substrate specificity, an amino acid bearing a large hydrophobic side chain at the P2 position is preferred. The protein is Papain of Carica papaya (Papaya).